The sequence spans 227 residues: NAD(P)H-quinone oxidoreductase subunit K, chloroplastic (227 aa).

4 residues coordinate [4Fe-4S] cluster: Cys-43, Cys-44, Cys-108, and Cys-139.

Belongs to the complex I 20 kDa subunit family. NDH is composed of at least 16 different subunits, 5 of which are encoded in the nucleus. [4Fe-4S] cluster is required as a cofactor.

Its subcellular location is the plastid. The protein localises to the chloroplast thylakoid membrane. It catalyses the reaction a plastoquinone + NADH + (n+1) H(+)(in) = a plastoquinol + NAD(+) + n H(+)(out). The enzyme catalyses a plastoquinone + NADPH + (n+1) H(+)(in) = a plastoquinol + NADP(+) + n H(+)(out). NDH shuttles electrons from NAD(P)H:plastoquinone, via FMN and iron-sulfur (Fe-S) centers, to quinones in the photosynthetic chain and possibly in a chloroplast respiratory chain. The immediate electron acceptor for the enzyme in this species is believed to be plastoquinone. Couples the redox reaction to proton translocation, and thus conserves the redox energy in a proton gradient. This Citrus sinensis (Sweet orange) protein is NAD(P)H-quinone oxidoreductase subunit K, chloroplastic.